Consider the following 277-residue polypeptide: Probable endonuclease 4 (277 aa).

Residues His70, His108, Glu145, Asp178, His181, His212, Asp225, His227, and Glu257 each coordinate Zn(2+).

Belongs to the AP endonuclease 2 family. The cofactor is Zn(2+).

It carries out the reaction Endonucleolytic cleavage to 5'-phosphooligonucleotide end-products.. Functionally, endonuclease IV plays a role in DNA repair. It cleaves phosphodiester bonds at apurinic or apyrimidinic (AP) sites, generating a 3'-hydroxyl group and a 5'-terminal sugar phosphate. This chain is Probable endonuclease 4, found in Mycoplasmopsis pulmonis (strain UAB CTIP) (Mycoplasma pulmonis).